Consider the following 431-residue polypeptide: Adenylosuccinate synthetase (431 aa).

Residues 13-19 and 41-43 contribute to the GTP site; these read GDEGKGK and GHT. Aspartate 14 (proton acceptor) is an active-site residue. Mg(2+) is bound by residues aspartate 14 and glycine 41. Residues 14 to 17, 39 to 42, threonine 130, arginine 144, glutamine 225, threonine 240, and arginine 304 each bind IMP; these read DEGK and NAGH. Histidine 42 functions as the Proton donor in the catalytic mechanism. Substrate is bound at residue 300–306; the sequence is ATTGRAR. Residues arginine 306, 332–334, and 415–417 each bind GTP; these read KLD and STG.

Belongs to the adenylosuccinate synthetase family. In terms of assembly, homodimer. The cofactor is Mg(2+).

Its subcellular location is the cytoplasm. The catalysed reaction is IMP + L-aspartate + GTP = N(6)-(1,2-dicarboxyethyl)-AMP + GDP + phosphate + 2 H(+). It participates in purine metabolism; AMP biosynthesis via de novo pathway; AMP from IMP: step 1/2. Plays an important role in the de novo pathway of purine nucleotide biosynthesis. Catalyzes the first committed step in the biosynthesis of AMP from IMP. The sequence is that of Adenylosuccinate synthetase from Ectopseudomonas mendocina (strain ymp) (Pseudomonas mendocina).